We begin with the raw amino-acid sequence, 258 residues long: Spectinomycin 9-adenylyltransferase (258 aa).

It catalyses the reaction spectinomycin + ATP = 9-O-adenylylspectinomycin + diphosphate. Mediates bacterial resistance to spectinomycin, is probably a spectinomycin 9-adenylyltransferase. The protein is Spectinomycin 9-adenylyltransferase of Campylobacter jejuni.